Here is a 319-residue protein sequence, read N- to C-terminus: Ficolin-2 (319 aa).

A signal peptide spans 1 to 22 (MVLGSAALFVLSLCVTELTLHA). Residues 45–101 (GCPGLPGALGPKGEAGAKGDRGESGLPGHPGKAGPTGPKGDRGEKGVRGEKGDTGPS) enclose the Collagen-like domain. Residues 53–106 (LGPKGEAGAKGDRGESGLPGHPGKAGPTGPKGDRGEKGVRGEKGDTGPSQSCAT) are disordered. Residues 83-97 (KGDRGEKGVRGEKGD) show a composition bias toward basic and acidic residues. The Fibrinogen C-terminal domain occupies 102 to 319 (QSCATGPRTC…KVSEMKVRLI (218 aa)). Cystine bridges form between Cys104–Cys132 and Cys111–Cys139. Asp255, Asp257, and Ser261 together coordinate Ca(2+). Cys263 and Cys276 are disulfide-bonded. Asn306 carries an N-linked (GlcNAc...) asparagine glycan.

The protein belongs to the ficolin lectin family. In terms of assembly, homotrimer. Interacts with elastin. Interacts with MASP1 and MASP2.

The protein localises to the secreted. May function in innate immunity through activation of the lectin complement pathway. Calcium-dependent and GlcNAc-binding lectin. The polypeptide is Ficolin-2 (Fcn2) (Rattus norvegicus (Rat)).